Reading from the N-terminus, the 358-residue chain is Ubiquitin thioesterase OTU1 (358 aa).

Residues 5-87 form the Ubiquitin-like domain; sequence FSVKLKSKKG…LIVEEKAGAA (83 aa). Positions 8–94 are UBX-like; that stretch reads KLKSKKGQFI…GAAGPTSTPL (87 aa). Positions 83 to 108 are disordered; that stretch reads KAGAAGPTSTPLASGSGSSTMEDDEA. The segment covering 89-102 has biased composition (polar residues); it reads PTSTPLASGSGSST. Positions 161 to 285 constitute an OTU domain; the sequence is LLKKVVPADN…GIHYDPLYME (125 aa). Positions 166–172 are cys-loop; that stretch reads VPADNSC. Aspartate 169 is an active-site residue. Cysteine 172 serves as the catalytic Nucleophile. A variable-loop region spans residues 224-234; that stretch reads IQKADSWGGAI. Positions 274-278 are his-loop; that stretch reads FDGIH. A substrate-binding site is contributed by isoleucine 277. Histidine 278 is a catalytic residue. The interval 301 to 306 is S2 site; that stretch reads MGVYQQ. Residues 328–352 form a C2H2-type zinc finger; it reads LRCMDCDVMLVGQGQAQEHAKKTGH. Residue histidine 352 is part of the active site.

The enzyme catalyses Thiol-dependent hydrolysis of ester, thioester, amide, peptide and isopeptide bonds formed by the C-terminal Gly of ubiquitin (a 76-residue protein attached to proteins as an intracellular targeting signal).. Functionally, hydrolase that can remove conjugated ubiquitin from proteins and may therefore play an important regulatory role at the level of protein turnover by preventing degradation. This is Ubiquitin thioesterase OTU1 from Drosophila pseudoobscura pseudoobscura (Fruit fly).